The following is a 549-amino-acid chain: MSGTAVARLLLRLELPSPGVMPPPPTDYDYGGPISDDEFLASAMATEGPTVRYDLFPQNNSQPTLQIVLNHTEVQTDLQYPHYEDLGLDPDPNWTRICEDVYNPLLENNRIEFWVCGVLINIVGVLGILGNIISMIILSRPQMRSSINYLLTGLARCDTVLIITSILLFGIPSIYPYTGHFFGYYNYVYPFISPAVFPIGMIAQTASIYMTFTVTLERYVAVCHPLKARALCTYGRAKIYFIVCVCFSLAYNMPRFWEVLTVTYPEPGKDVILHCVRPSRLRRSETYINIYIHWCYLIVNYIIPFLTLAILNCLIYRQVKRANRERQRLSRSEKREIGLATMLLCVVIVFFMLNFLPLVLNISEAFYSTIDHKITKISNLLITINSSVNFLIYIIFGEKFKRIFLLIFFKRRLSRDQPDLIHYESSISNNGDGTLNHRSSGRFSRHGTQRSTTTTYLVATGGPGGGGCGGGGGNNSLNNVRLTQVSGSPGLVKIKRNRAPSPGPVVYFPAREMQRSASTTNSTTNNNTSIGYDWTLPDSKKLGHVSSGF.

Residues 1 to 117 (MSGTAVARLL…NNRIEFWVCG (117 aa)) lie on the Extracellular side of the membrane. Residues Asn59, Asn70, and Asn93 are each glycosylated (N-linked (GlcNAc...) asparagine). A helical transmembrane segment spans residues 118–138 (VLINIVGVLGILGNIISMIIL). At 139 to 158 (SRPQMRSSINYLLTGLARCD) the chain is on the cytoplasmic side. Residues 159–179 (TVLIITSILLFGIPSIYPYTG) traverse the membrane as a helical segment. At 180–181 (HF) the chain is on the extracellular side. Residues 182–202 (FGYYNYVYPFISPAVFPIGMI) traverse the membrane as a helical segment. Over 203-238 (AQTASIYMTFTVTLERYVAVCHPLKARALCTYGRAK) the chain is Cytoplasmic. A helical membrane pass occupies residues 239–259 (IYFIVCVCFSLAYNMPRFWEV). The Extracellular segment spans residues 260–289 (LTVTYPEPGKDVILHCVRPSRLRRSETYIN). Residues 290 to 310 (IYIHWCYLIVNYIIPFLTLAI) traverse the membrane as a helical segment. At 311–341 (LNCLIYRQVKRANRERQRLSRSEKREIGLAT) the chain is on the cytoplasmic side. A helical membrane pass occupies residues 342–362 (MLLCVVIVFFMLNFLPLVLNI). At 363 to 376 (SEAFYSTIDHKITK) the chain is on the extracellular side. A helical membrane pass occupies residues 377–397 (ISNLLITINSSVNFLIYIIFG). Residues 398–549 (EKFKRIFLLI…KKLGHVSSGF (152 aa)) are Cytoplasmic-facing.

It belongs to the G-protein coupled receptor 1 family. As to expression, expressed in ovaries, heads and bodies. Expressed in dopaminergic neurons.

The protein localises to the cell membrane. A receptor for the FMRFamide peptides. Reacts with high affinity to FMRFamide and intrinsic FMRFamide-related peptides. By stimulating intracellular calcium signaling through the inositol 1,4,5-trisphosphate receptor, Itpr, in dopaminergic neurons, may be involved in the maintenance of neuronal excitability and in the regulation of flight bout duration. The sequence is that of FMRFamide receptor from Drosophila melanogaster (Fruit fly).